Reading from the N-terminus, the 233-residue chain is Uridylate kinase (233 aa).

Residues 9-12, Gly51, and Arg55 contribute to the ATP site; that span reads KLSG. Residues Asp69 and 130–137 contribute to the UMP site; that span reads TGNPFFST. Residues Asn158, Tyr164, and Asp167 each contribute to the ATP site.

Belongs to the UMP kinase family. In terms of assembly, homohexamer.

It is found in the cytoplasm. It catalyses the reaction UMP + ATP = UDP + ADP. The protein operates within pyrimidine metabolism; CTP biosynthesis via de novo pathway; UDP from UMP (UMPK route): step 1/1. Its activity is regulated as follows. Inhibited by UTP. Its function is as follows. Catalyzes the reversible phosphorylation of UMP to UDP. The chain is Uridylate kinase from Thermus thermophilus (strain ATCC BAA-163 / DSM 7039 / HB27).